The following is a 165-amino-acid chain: Ubiquitin-fold modifier-conjugating enzyme 1 (165 aa).

C117 serves as the catalytic Glycyl thioester intermediate.

The protein belongs to the ubiquitin-conjugating enzyme family. UFC1 subfamily.

In terms of biological role, E2-like enzyme which forms an intermediate with UFM1 via a thioester linkage. The sequence is that of Ubiquitin-fold modifier-conjugating enzyme 1 from Brugia malayi (Filarial nematode worm).